A 422-amino-acid polypeptide reads, in one-letter code: Serine--tRNA ligase (422 aa).

231 to 233 (TGE) contacts L-serine. 262–264 (RQE) serves as a coordination point for ATP. Glutamate 285 contributes to the L-serine binding site. 349-352 (EISS) lines the ATP pocket. Serine 384 provides a ligand contact to L-serine.

Belongs to the class-II aminoacyl-tRNA synthetase family. Type-1 seryl-tRNA synthetase subfamily. In terms of assembly, homodimer. The tRNA molecule binds across the dimer.

Its subcellular location is the cytoplasm. The catalysed reaction is tRNA(Ser) + L-serine + ATP = L-seryl-tRNA(Ser) + AMP + diphosphate + H(+). It carries out the reaction tRNA(Sec) + L-serine + ATP = L-seryl-tRNA(Sec) + AMP + diphosphate + H(+). Its pathway is aminoacyl-tRNA biosynthesis; selenocysteinyl-tRNA(Sec) biosynthesis; L-seryl-tRNA(Sec) from L-serine and tRNA(Sec): step 1/1. Catalyzes the attachment of serine to tRNA(Ser). Is also able to aminoacylate tRNA(Sec) with serine, to form the misacylated tRNA L-seryl-tRNA(Sec), which will be further converted into selenocysteinyl-tRNA(Sec). The polypeptide is Serine--tRNA ligase (Mesoplasma florum (strain ATCC 33453 / NBRC 100688 / NCTC 11704 / L1) (Acholeplasma florum)).